The following is a 457-amino-acid chain: tRNA-2-methylthio-N(6)-dimethylallyladenosine synthase (457 aa).

Positions 3-120 (KKVYVKTFGC…LPQMIDARRA (118 aa)) constitute an MTTase N-terminal domain. [4Fe-4S] cluster-binding residues include C12, C49, C83, C157, C161, and C164. The 235-residue stretch at 143 to 377 (RVEGPSAFVS…QATIEENVAR (235 aa)) folds into the Radical SAM core domain. The region spanning 380–447 (QSMVGKVERI…PHSLRGELVI (68 aa)) is the TRAM domain.

This sequence belongs to the methylthiotransferase family. MiaB subfamily. In terms of assembly, monomer. Requires [4Fe-4S] cluster as cofactor.

It localises to the cytoplasm. It carries out the reaction N(6)-dimethylallyladenosine(37) in tRNA + (sulfur carrier)-SH + AH2 + 2 S-adenosyl-L-methionine = 2-methylsulfanyl-N(6)-dimethylallyladenosine(37) in tRNA + (sulfur carrier)-H + 5'-deoxyadenosine + L-methionine + A + S-adenosyl-L-homocysteine + 2 H(+). Catalyzes the methylthiolation of N6-(dimethylallyl)adenosine (i(6)A), leading to the formation of 2-methylthio-N6-(dimethylallyl)adenosine (ms(2)i(6)A) at position 37 in tRNAs that read codons beginning with uridine. The sequence is that of tRNA-2-methylthio-N(6)-dimethylallyladenosine synthase from Burkholderia cenocepacia (strain ATCC BAA-245 / DSM 16553 / LMG 16656 / NCTC 13227 / J2315 / CF5610) (Burkholderia cepacia (strain J2315)).